The sequence spans 84 residues: Putative membrane protein insertion efficiency factor (84 aa).

Residues 63–84 (WGGSGYDPVPGADPEHDRRPRG) form a disordered region. Over residues 75–84 (DPEHDRRPRG) the composition is skewed to basic and acidic residues.

Belongs to the UPF0161 family.

It localises to the cell inner membrane. Functionally, could be involved in insertion of integral membrane proteins into the membrane. This chain is Putative membrane protein insertion efficiency factor, found in Cereibacter sphaeroides (strain ATCC 17029 / ATH 2.4.9) (Rhodobacter sphaeroides).